Here is a 716-residue protein sequence, read N- to C-terminus: Fatty acid oxidation complex subunit alpha (716 aa).

Residues 1–189 (MIYQSPTIQV…KVGAIDAVVA (189 aa)) form an enoyl-CoA hydratase/isomerase region. Residue Asp296 participates in substrate binding. The interval 311–716 (QAVNSAAVLG…AATNGSYYPA (406 aa)) is 3-hydroxyacyl-CoA dehydrogenase. Residues Met324, Asp343, 400–402 (VVE), Lys407, and Ser429 contribute to the NAD(+) site. His450 serves as the catalytic For 3-hydroxyacyl-CoA dehydrogenase activity. Residue Asn453 participates in NAD(+) binding. Positions 500 and 660 each coordinate substrate.

The protein in the N-terminal section; belongs to the enoyl-CoA hydratase/isomerase family. This sequence in the C-terminal section; belongs to the 3-hydroxyacyl-CoA dehydrogenase family. In terms of assembly, heterotetramer of two alpha chains (FadB) and two beta chains (FadA).

The catalysed reaction is a (3S)-3-hydroxyacyl-CoA + NAD(+) = a 3-oxoacyl-CoA + NADH + H(+). It catalyses the reaction a (3S)-3-hydroxyacyl-CoA = a (2E)-enoyl-CoA + H2O. The enzyme catalyses a 4-saturated-(3S)-3-hydroxyacyl-CoA = a (3E)-enoyl-CoA + H2O. It carries out the reaction (3S)-3-hydroxybutanoyl-CoA = (3R)-3-hydroxybutanoyl-CoA. The catalysed reaction is a (3Z)-enoyl-CoA = a 4-saturated (2E)-enoyl-CoA. It catalyses the reaction a (3E)-enoyl-CoA = a 4-saturated (2E)-enoyl-CoA. The protein operates within lipid metabolism; fatty acid beta-oxidation. Its function is as follows. Involved in the aerobic and anaerobic degradation of long-chain fatty acids via beta-oxidation cycle. Catalyzes the formation of 3-oxoacyl-CoA from enoyl-CoA via L-3-hydroxyacyl-CoA. It can also use D-3-hydroxyacyl-CoA and cis-3-enoyl-CoA as substrate. The protein is Fatty acid oxidation complex subunit alpha of Shewanella loihica (strain ATCC BAA-1088 / PV-4).